Here is a 220-residue protein sequence, read N- to C-terminus: Iron-sulfur cluster repair protein YtfE (220 aa).

Belongs to the RIC family. YtfE subfamily. Homodimer.

Its subcellular location is the cytoplasm. In terms of biological role, di-iron-containing protein involved in the repair of iron-sulfur clusters damaged by oxidative and nitrosative stress conditions. This is Iron-sulfur cluster repair protein YtfE from Escherichia coli O157:H7.